We begin with the raw amino-acid sequence, 700 residues long: Polyribonucleotide nucleotidyltransferase (700 aa).

Positions 485 and 491 each coordinate Mg(2+). The region spanning 552–611 (PRITVIKINPEKIRDVIGKGGAVIRALTEETGTTIELEDDGTVKIASSNGEATKEAIRRI) is the KH domain. Residues 621–689 (GRIYNGKVIR…RQGRVRLSIK (69 aa)) enclose the S1 motif domain.

This sequence belongs to the polyribonucleotide nucleotidyltransferase family. Component of the RNA degradosome, which is a multiprotein complex involved in RNA processing and mRNA degradation. The cofactor is Mg(2+).

It is found in the cytoplasm. The enzyme catalyses RNA(n+1) + phosphate = RNA(n) + a ribonucleoside 5'-diphosphate. In terms of biological role, involved in mRNA degradation. Catalyzes the phosphorolysis of single-stranded polyribonucleotides processively in the 3'- to 5'-direction. The chain is Polyribonucleotide nucleotidyltransferase from Shewanella baltica (strain OS185).